Reading from the N-terminus, the 929-residue chain is Valine--tRNA ligase (929 aa).

The short motif at 59 to 69 is the 'HIGH' region element; that stretch reads PNVTGSLHMGH. The 'KMSKS' region signature appears at 557-561; sequence KMSKS. Residue Lys-560 coordinates ATP. The stretch at 862–929 forms a coiled coil; it reads LVDLDALRGR…LARQRLSDLG (68 aa).

This sequence belongs to the class-I aminoacyl-tRNA synthetase family. ValS type 1 subfamily. Monomer.

Its subcellular location is the cytoplasm. The enzyme catalyses tRNA(Val) + L-valine + ATP = L-valyl-tRNA(Val) + AMP + diphosphate. Catalyzes the attachment of valine to tRNA(Val). As ValRS can inadvertently accommodate and process structurally similar amino acids such as threonine, to avoid such errors, it has a 'posttransfer' editing activity that hydrolyzes mischarged Thr-tRNA(Val) in a tRNA-dependent manner. In Prochlorococcus marinus (strain MIT 9313), this protein is Valine--tRNA ligase.